We begin with the raw amino-acid sequence, 367 residues long: Phosphoribosylformylglycinamidine cyclo-ligase (367 aa).

The protein belongs to the AIR synthase family.

The protein localises to the cytoplasm. It catalyses the reaction 2-formamido-N(1)-(5-O-phospho-beta-D-ribosyl)acetamidine + ATP = 5-amino-1-(5-phospho-beta-D-ribosyl)imidazole + ADP + phosphate + H(+). Its pathway is purine metabolism; IMP biosynthesis via de novo pathway; 5-amino-1-(5-phospho-D-ribosyl)imidazole from N(2)-formyl-N(1)-(5-phospho-D-ribosyl)glycinamide: step 2/2. The chain is Phosphoribosylformylglycinamidine cyclo-ligase from Cyanothece sp. (strain PCC 7425 / ATCC 29141).